Consider the following 388-residue polypeptide: Chorismate synthase (388 aa).

Residues R39 and R45 each contribute to the NADP(+) site. FMN is bound by residues 130 to 132, 251 to 252, G296, 311 to 315, and R337; these read RSS, NA, and KPIPT.

This sequence belongs to the chorismate synthase family. In terms of assembly, homotetramer. FMNH2 serves as cofactor.

It carries out the reaction 5-O-(1-carboxyvinyl)-3-phosphoshikimate = chorismate + phosphate. The protein operates within metabolic intermediate biosynthesis; chorismate biosynthesis; chorismate from D-erythrose 4-phosphate and phosphoenolpyruvate: step 7/7. Its function is as follows. Catalyzes the anti-1,4-elimination of the C-3 phosphate and the C-6 proR hydrogen from 5-enolpyruvylshikimate-3-phosphate (EPSP) to yield chorismate, which is the branch point compound that serves as the starting substrate for the three terminal pathways of aromatic amino acid biosynthesis. This reaction introduces a second double bond into the aromatic ring system. The sequence is that of Chorismate synthase from Lactococcus lactis subsp. cremoris (strain MG1363).